The following is a 697-amino-acid chain: Elongation factor G 2 (697 aa).

Positions 5–280 constitute a tr-type G domain; that stretch reads SKYRNIGIFA…AVVDYLPAPD (276 aa). Residues 14-21, 78-82, and 132-135 contribute to the GTP site; these read AHVDAGKT, DTPGH, and NKLD.

The protein belongs to the TRAFAC class translation factor GTPase superfamily. Classic translation factor GTPase family. EF-G/EF-2 subfamily.

The protein localises to the cytoplasm. Catalyzes the GTP-dependent ribosomal translocation step during translation elongation. During this step, the ribosome changes from the pre-translocational (PRE) to the post-translocational (POST) state as the newly formed A-site-bound peptidyl-tRNA and P-site-bound deacylated tRNA move to the P and E sites, respectively. Catalyzes the coordinated movement of the two tRNA molecules, the mRNA and conformational changes in the ribosome. The protein is Elongation factor G 2 of Shewanella sp. (strain MR-7).